The sequence spans 244 residues: MSTGLDMSLDDMIAKNRKSRGGAGPARGTGSGSGPGPTRRNNPNRKSTRSAPYQSAKAPESTWGHDMFSDRSEDHRSGRSSAGIETGTKLYISNLDYGVMNEDIKELFAEVGELKRYTVHFDRSGRSKGTAEVVYSRRGDALAAVKKYNDVQLDGKPMKIEIVGTNLQTAAAPSGRPANGNSNGAPWRGGQGRGGQQRGGGRGGGGRGGGGRGRRPGKGPAEKISAEDLDADLDKYHSGDMETN.

Residues 1 to 82 form a disordered region; the sequence is MSTGLDMSLD…EDHRSGRSSA (82 aa). Ser-2 carries the N-acetylserine modification. The segment covering 21 to 35 has biased composition (gly residues); sequence GGAGPARGTGSGSGP. Basic and acidic residues predominate over residues 67-77; sequence MFSDRSEDHRS. The region spanning 88 to 165 is the RRM domain; that stretch reads TKLYISNLDY…KPMKIEIVGT (78 aa). The disordered stretch occupies residues 169–244; it reads TAAAPSGRPA…KYHSGDMETN (76 aa). Gly residues predominate over residues 187 to 211; sequence WRGGQGRGGQQRGGGRGGGGRGGGG. The span at 220–244 shows a compositional bias: basic and acidic residues; the sequence is PAEKISAEDLDADLDKYHSGDMETN.

It belongs to the ALYREF family.

It localises to the nucleus. It is found in the nucleoplasm. Its subcellular location is the nucleolus. Its function is as follows. Export adapter involved in nuclear export of spliced and unspliced mRNA. The protein is THO complex subunit 4A (ALY1) of Arabidopsis thaliana (Mouse-ear cress).